The chain runs to 82 residues: RNA-binding protein Hfq (82 aa).

The Sm domain occupies 10-70 (DIFLNGARKN…LSTITPSKAI (61 aa)).

The protein belongs to the Hfq family. Homohexamer.

Functionally, RNA chaperone that binds small regulatory RNA (sRNAs) and mRNAs to facilitate mRNA translational regulation in response to envelope stress, environmental stress and changes in metabolite concentrations. Also binds with high specificity to tRNAs. In Clostridium kluyveri (strain NBRC 12016), this protein is RNA-binding protein Hfq.